We begin with the raw amino-acid sequence, 371 residues long: Alanine dehydrogenase (371 aa).

Arg-15 and Lys-75 together coordinate substrate. The Proton donor/acceptor role is filled by His-96. Residues Ser-134, 178–179 (TA), Asp-198, Lys-203, Ser-220, 239–240 (VL), 267–270 (IAID), Arg-279, and 298–301 (VANM) each bind NAD(+). The Proton donor/acceptor role is filled by Asp-270. Mg(2+) contacts are provided by Glu-323 and His-327.

This sequence belongs to the AlaDH/PNT family. In terms of assembly, homohexamer. Trimer of dimers. Mg(2+) serves as cofactor.

It localises to the secreted. It carries out the reaction L-alanine + NAD(+) + H2O = pyruvate + NH4(+) + NADH + H(+). It participates in amino-acid degradation; L-alanine degradation via dehydrogenase pathway; NH(3) and pyruvate from L-alanine: step 1/1. Its activity is regulated as follows. Inhibited by CuSO(4) and ZnCl(2). Catalyzes the reversible reductive amination of pyruvate to L-alanine. However, since the physiological environment of M.tuberculosis has a neutral pH, it can be assumed that the enzyme catalyzes exclusively the formation of L-alanine. May play a role in cell wall synthesis as L-alanine is an important constituent of the peptidoglycan layer. The chain is Alanine dehydrogenase (ald) from Mycobacterium tuberculosis (strain ATCC 25618 / H37Rv).